A 364-amino-acid polypeptide reads, in one-letter code: MSILNLVRADLLNSKNYVPGGESARYRSHANELPWSPVTMGEHNLNYYPNIGLQIELQKQLAKRYQIYSDQIILTRGSDDGIDLTTRLFLTAGKDAFMQFPPTFPMYAFYVRLQQAELIECPLDRRTNFRLTLDQIENSWKPNCKIIMFCSPNNPTGNLVDLNLIAKTCELYANQSIIVVDEAYIEFANAPSATSLIGEFENLIVLRTLSKAFGLAGLRLGCIIAQSPIIQAFNKIIAPYSIATPSMELAKRALNNSDWFTKTIEQIKSSRAWVIKKFADNPIIEKIYPTETNFILIQTRFSKQLTTWLAHYGIAVRDFPSSSLLHDHLRITVGHDEQNQLLINTLSSFNADVAGLNYEKDFIY.

Residue Lys211 is modified to N6-(pyridoxal phosphate)lysine.

This sequence belongs to the class-II pyridoxal-phosphate-dependent aminotransferase family. Histidinol-phosphate aminotransferase subfamily. Homodimer. Pyridoxal 5'-phosphate serves as cofactor.

The enzyme catalyses L-histidinol phosphate + 2-oxoglutarate = 3-(imidazol-4-yl)-2-oxopropyl phosphate + L-glutamate. Its pathway is amino-acid biosynthesis; L-histidine biosynthesis; L-histidine from 5-phospho-alpha-D-ribose 1-diphosphate: step 7/9. This Legionella pneumophila subsp. pneumophila (strain Philadelphia 1 / ATCC 33152 / DSM 7513) protein is Histidinol-phosphate aminotransferase 1.